Here is a 354-residue protein sequence, read N- to C-terminus: 3-dehydroquinate synthase (354 aa).

Residues 66-71 (SGETSK), 100-104 (GATGD), 124-125 (TT), Lys-136, Lys-145, and 163-166 (FLET) contribute to the NAD(+) site. Zn(2+) is bound by residues Glu-178, His-242, and His-256.

Belongs to the sugar phosphate cyclases superfamily. Dehydroquinate synthase family. NAD(+) is required as a cofactor. Requires Co(2+) as cofactor. It depends on Zn(2+) as a cofactor.

It is found in the cytoplasm. The catalysed reaction is 7-phospho-2-dehydro-3-deoxy-D-arabino-heptonate = 3-dehydroquinate + phosphate. It functions in the pathway metabolic intermediate biosynthesis; chorismate biosynthesis; chorismate from D-erythrose 4-phosphate and phosphoenolpyruvate: step 2/7. Functionally, catalyzes the conversion of 3-deoxy-D-arabino-heptulosonate 7-phosphate (DAHP) to dehydroquinate (DHQ). This is 3-dehydroquinate synthase from Staphylococcus epidermidis (strain ATCC 35984 / DSM 28319 / BCRC 17069 / CCUG 31568 / BM 3577 / RP62A).